A 387-amino-acid chain; its full sequence is Sulfate adenylyltransferase (387 aa).

Belongs to the sulfate adenylyltransferase family.

It catalyses the reaction sulfate + ATP + H(+) = adenosine 5'-phosphosulfate + diphosphate. Its pathway is sulfur metabolism; hydrogen sulfide biosynthesis; sulfite from sulfate: step 1/3. The sequence is that of Sulfate adenylyltransferase (sat) from Deinococcus radiodurans (strain ATCC 13939 / DSM 20539 / JCM 16871 / CCUG 27074 / LMG 4051 / NBRC 15346 / NCIMB 9279 / VKM B-1422 / R1).